Consider the following 471-residue polypeptide: Tyrosine--tRNA ligase (471 aa).

Tyrosine 41 contacts L-tyrosine. A 'HIGH' region motif is present at residues proline 46 to asparagine 55. Positions 176 and 180 each coordinate L-tyrosine. Residues lysine 236–threonine 240 carry the 'KMSKS' region motif. Lysine 239 lines the ATP pocket. The S4 RNA-binding domain maps to aspartate 403–tyrosine 471.

Belongs to the class-I aminoacyl-tRNA synthetase family. TyrS type 1 subfamily. As to quaternary structure, homodimer.

The protein localises to the cytoplasm. It carries out the reaction tRNA(Tyr) + L-tyrosine + ATP = L-tyrosyl-tRNA(Tyr) + AMP + diphosphate + H(+). Its function is as follows. Catalyzes the attachment of tyrosine to tRNA(Tyr) in a two-step reaction: tyrosine is first activated by ATP to form Tyr-AMP and then transferred to the acceptor end of tRNA(Tyr). The protein is Tyrosine--tRNA ligase of Tropheryma whipplei (strain Twist) (Whipple's bacillus).